Consider the following 250-residue polypeptide: MMLKPEGLKLIDENGRRLDGRKKYELRPIKMKVGVLKNANGSAYIEWGKNKIIAAVYGPREIHPKHLQRPDRAILRVRYNMAPFSVEERKKPGPDRRSIEISKVIRGALEPALILEMFPRTAIDVFIEVLQADAGTRVAGITAASLALADAGIPMRDLVAACSAGKIEGEIVLDLNKEEDNYGEADVPVAIMPIKNDITLLQMDGYLTKEEFIEAVKLAIKGAKAVYQKQREALKEKYLKIAQEVEGSEQ.

This sequence belongs to the RNase PH family. Rrp41 subfamily. In terms of assembly, component of the archaeal exosome complex. Forms a hexameric ring-like arrangement composed of 3 Rrp41-Rrp42 heterodimers. The hexameric ring associates with a trimer of Rrp4 and/or Csl4 subunits.

The protein resides in the cytoplasm. Functionally, catalytic component of the exosome, which is a complex involved in RNA degradation. Has 3'-&gt;5' exoribonuclease activity. Can also synthesize heteromeric RNA-tails. This chain is Exosome complex component Rrp41, found in Pyrococcus furiosus (strain ATCC 43587 / DSM 3638 / JCM 8422 / Vc1).